The following is a 250-amino-acid chain: Type-1Ab cytolytic delta-endotoxin (250 aa).

This sequence belongs to the cyt1/cyt2 endotoxin family. Post-translationally, active after proteolytic processing.

Functionally, kills the larvae of dipteran insects by making pores in the epithelial cell membrane of the insect midgut. The chain is Type-1Ab cytolytic delta-endotoxin (cyt1Ab1) from Bacillus thuringiensis subsp. medellin.